Here is a 363-residue protein sequence, read N- to C-terminus: Ribonuclease D (363 aa).

Residues 5–168 (ITHPSELTDR…AIHDELTRRL (164 aa)) form the 3'-5' exonuclease domain. The region spanning 208 to 288 (EPAAQRRLLR…NTPLPDEEHA (81 aa)) is the HRDC domain.

The protein belongs to the RNase D family. Requires a divalent metal cation as cofactor.

The protein localises to the cytoplasm. It catalyses the reaction Exonucleolytic cleavage that removes extra residues from the 3'-terminus of tRNA to produce 5'-mononucleotides.. In terms of biological role, exonuclease involved in the 3' processing of various precursor tRNAs. Initiates hydrolysis at the 3'-terminus of an RNA molecule and releases 5'-mononucleotides. The sequence is that of Ribonuclease D from Xanthomonas oryzae pv. oryzae (strain KACC10331 / KXO85).